The chain runs to 141 residues: Large ribosomal subunit protein uL11 (141 aa).

The protein belongs to the universal ribosomal protein uL11 family. In terms of assembly, part of the ribosomal stalk of the 50S ribosomal subunit. Interacts with L10 and the large rRNA to form the base of the stalk. L10 forms an elongated spine to which L12 dimers bind in a sequential fashion forming a multimeric L10(L12)X complex. Post-translationally, one or more lysine residues are methylated.

Functionally, forms part of the ribosomal stalk which helps the ribosome interact with GTP-bound translation factors. The chain is Large ribosomal subunit protein uL11 from Acetivibrio thermocellus (strain ATCC 27405 / DSM 1237 / JCM 9322 / NBRC 103400 / NCIMB 10682 / NRRL B-4536 / VPI 7372) (Clostridium thermocellum).